The sequence spans 320 residues: MYYKVILGIESSCDDLSIAIAIDNKIVTTKTKSSSSVHANYGGVVPEIAARYHEEILHQTLNEALTEANLTINKIDLITYTENPGLLNCLHVAKVFANTLGYLLKIPAQGINHLYGHIFSPMIDDGDCLYQKSDLIYPALGIVVSGGHTAIYDVQSPSKITLLDETLDDAIGEVYDKVGRALGLQYPAGAKIDQLYNPEQAETVEFLKTNKLSAFSYSGFKSAVLRYIELNKNQPDFNLVQAVSSFQKFIIDDFIDRIKNVINKADSKYQTILLGGGVSANSYLRSELKELAIKTLVPKPIYSGDNAAMIINYAQYLLNE.

His113 and His117 together coordinate Fe cation. Substrate-binding positions include 143-147 (VVSGG), Asp176, Gly189, Asp193, and Asn281. Asp305 contributes to the Fe cation binding site.

It belongs to the KAE1 / TsaD family. Fe(2+) is required as a cofactor.

It localises to the cytoplasm. It catalyses the reaction L-threonylcarbamoyladenylate + adenosine(37) in tRNA = N(6)-L-threonylcarbamoyladenosine(37) in tRNA + AMP + H(+). Required for the formation of a threonylcarbamoyl group on adenosine at position 37 (t(6)A37) in tRNAs that read codons beginning with adenine. Is involved in the transfer of the threonylcarbamoyl moiety of threonylcarbamoyl-AMP (TC-AMP) to the N6 group of A37, together with TsaE and TsaB. TsaD likely plays a direct catalytic role in this reaction. This chain is tRNA N6-adenosine threonylcarbamoyltransferase, found in Mycoplasmoides gallisepticum (strain R(low / passage 15 / clone 2)) (Mycoplasma gallisepticum).